We begin with the raw amino-acid sequence, 122 residues long: Photosystem II extrinsic protein U (122 aa).

The N-terminal stretch at 1–26 (MKTIVRLFAILMVLISSVGFVGSAVA) is a signal peptide.

Belongs to the PsbU family. In terms of assembly, PSII is composed of 1 copy each of membrane proteins PsbA, PsbB, PsbC, PsbD, PsbE, PsbF, PsbH, PsbI, PsbJ, PsbK, PsbL, PsbM, PsbT, PsbX, PsbY, PsbZ, Psb30/Ycf12, peripheral proteins PsbO, CyanoQ (PsbQ), PsbU, PsbV and a large number of cofactors. It forms dimeric complexes.

The protein resides in the cellular thylakoid membrane. Its function is as follows. One of the extrinsic, lumenal subunits of photosystem II (PSII). PSII is a light-driven water plastoquinone oxidoreductase, using light energy to abstract electrons from H(2)O, generating a proton gradient subsequently used for ATP formation. The extrinsic proteins stabilize the structure of photosystem II oxygen-evolving complex (OEC), the ion environment of oxygen evolution and protect the OEC against heat-induced inactivation. This Crocosphaera subtropica (strain ATCC 51142 / BH68) (Cyanothece sp. (strain ATCC 51142)) protein is Photosystem II extrinsic protein U.